A 180-amino-acid polypeptide reads, in one-letter code: GTP cyclohydrolase 1 (180 aa).

Positions 71, 74, and 142 each coordinate Zn(2+).

Belongs to the GTP cyclohydrolase I family. Homomer.

It carries out the reaction GTP + H2O = 7,8-dihydroneopterin 3'-triphosphate + formate + H(+). Its pathway is cofactor biosynthesis; 7,8-dihydroneopterin triphosphate biosynthesis; 7,8-dihydroneopterin triphosphate from GTP: step 1/1. In Helicobacter pylori (strain P12), this protein is GTP cyclohydrolase 1.